Here is an 85-residue protein sequence, read N- to C-terminus: uncharacterized protein (85 aa).

A helical transmembrane segment spans residues 39 to 59; it reads FILFEISMYIIFIVTFCYKII.

The protein resides in the host membrane. This is an uncharacterized protein from Gallid herpesvirus 2 (strain Chicken/Md5/ATCC VR-987) (GaHV-2).